The primary structure comprises 292 residues: 4-hydroxy-tetrahydrodipicolinate synthase (292 aa).

Threonine 45 provides a ligand contact to pyruvate. The Proton donor/acceptor role is filled by tyrosine 133. The Schiff-base intermediate with substrate role is filled by lysine 161. Isoleucine 203 is a binding site for pyruvate.

The protein belongs to the DapA family. Homotetramer; dimer of dimers.

It localises to the cytoplasm. It carries out the reaction L-aspartate 4-semialdehyde + pyruvate = (2S,4S)-4-hydroxy-2,3,4,5-tetrahydrodipicolinate + H2O + H(+). It participates in amino-acid biosynthesis; L-lysine biosynthesis via DAP pathway; (S)-tetrahydrodipicolinate from L-aspartate: step 3/4. Its function is as follows. Catalyzes the condensation of (S)-aspartate-beta-semialdehyde [(S)-ASA] and pyruvate to 4-hydroxy-tetrahydrodipicolinate (HTPA). This Salmonella paratyphi A (strain AKU_12601) protein is 4-hydroxy-tetrahydrodipicolinate synthase.